Here is a 295-residue protein sequence, read N- to C-terminus: MPRLEGSMVAIVTPMKDGAVDLRALRELTEWQIAEGTDGIVPCGTTGEGATLTAAERAEVIRAVVEVARGRALVVAGAGSNATHEAIEGVKAAKALGADAALVVTPYYNKPTPEGLYRHYTAIWEATRFPVVAYNVPGRTAVDMGPDTVARLAKAGAIVGIKEATASMDRQVQLVERIGKDAIAYLSGDDFTVVPYIACGGHGVISVISNIAPRAMKDLVVAARLGDFARALDLQVRMAELNRVMFVETSPGPVKAAVALLGRAGPELRLPLAPVSEASLSKVREAMTRFGLKLA.

Residue T46 coordinates pyruvate. Y134 functions as the Proton donor/acceptor in the catalytic mechanism. Catalysis depends on K162, which acts as the Schiff-base intermediate with substrate. I205 provides a ligand contact to pyruvate.

The protein belongs to the DapA family. As to quaternary structure, homotetramer; dimer of dimers.

Its subcellular location is the cytoplasm. The catalysed reaction is L-aspartate 4-semialdehyde + pyruvate = (2S,4S)-4-hydroxy-2,3,4,5-tetrahydrodipicolinate + H2O + H(+). It participates in amino-acid biosynthesis; L-lysine biosynthesis via DAP pathway; (S)-tetrahydrodipicolinate from L-aspartate: step 3/4. Catalyzes the condensation of (S)-aspartate-beta-semialdehyde [(S)-ASA] and pyruvate to 4-hydroxy-tetrahydrodipicolinate (HTPA). This is 4-hydroxy-tetrahydrodipicolinate synthase from Anaeromyxobacter sp. (strain Fw109-5).